A 485-amino-acid polypeptide reads, in one-letter code: uncharacterized protein (485 aa).

The protein localises to the virion. This is an uncharacterized protein from Acanthamoeba polyphaga mimivirus (APMV).